The chain runs to 321 residues: Calcium-regulated beta-propeller protein CarP (321 aa).

The first 42 residues, 1 to 42, serve as a signal peptide directing secretion; the sequence is MTIHAQTPEPFSMSRAFTPRRLLLAVLLVALSALVLLGQSFR.

This sequence belongs to the YjiK family.

It is found in the cell inner membrane. Functionally, plays a role in intracellular Ca(2+) homeostasis. Involved in modulating Ca(2+)-induced swarming motility and pyocyanine production. Plays a role in regulating virulence in a Ca(2+)-dependent manner. Involved in cell protection against oxidative stress in the presence of elevated Ca(2+). In Pseudomonas aeruginosa (strain ATCC 15692 / DSM 22644 / CIP 104116 / JCM 14847 / LMG 12228 / 1C / PRS 101 / PAO1), this protein is Calcium-regulated beta-propeller protein CarP.